The following is a 641-amino-acid chain: Bifunctional protein glk (641 aa).

Positions 1–340 (MSTGAQTKAA…QLSNRTGGAS (340 aa)) are glucokinase. ATP is bound at residue 23 to 28 (ADVGGT). The 77-residue stretch at 341 to 417 (SAVFERIRQM…LKLATGLTGT (77 aa)) folds into the HTH rpiR-type domain. Residues 341–641 (SAVFERIRQM…SHGAAPAAKD (301 aa)) are putative HTH-type transcriptional regulator. The H-T-H motif DNA-binding region spans 377 to 396 (IVDIARKADVSQPTVIRFCR). The SIS domain occupies 461 to 600 (AIDILNNARR…AVGVAIRRAA (140 aa)). Residues 576-596 (SMISRILHLVMIDILAVGVAI) form a helical membrane-spanning segment.

It in the N-terminal section; belongs to the bacterial glucokinase family.

The protein localises to the membrane. The catalysed reaction is D-glucose + ATP = D-glucose 6-phosphate + ADP + H(+). The chain is Bifunctional protein glk (glk) from Burkholderia pseudomallei (strain 1710b).